We begin with the raw amino-acid sequence, 140 residues long: ATP synthase epsilon chain (140 aa).

It belongs to the ATPase epsilon chain family. As to quaternary structure, F-type ATPases have 2 components, CF(1) - the catalytic core - and CF(0) - the membrane proton channel. CF(1) has five subunits: alpha(3), beta(3), gamma(1), delta(1), epsilon(1). CF(0) has three main subunits: a, b and c.

Its subcellular location is the cell inner membrane. Produces ATP from ADP in the presence of a proton gradient across the membrane. The polypeptide is ATP synthase epsilon chain (Bordetella bronchiseptica (strain ATCC BAA-588 / NCTC 13252 / RB50) (Alcaligenes bronchisepticus)).